The primary structure comprises 443 residues: Ribosomal protein uS12 methylthiotransferase RimO (443 aa).

Residues 5 to 115 (PNIGFISLGC…VMKHVHKYVP (111 aa)) enclose the MTTase N-terminal domain. 6 residues coordinate [4Fe-4S] cluster: Cys14, Cys50, Cys79, Cys147, Cys151, and Cys154. The Radical SAM core domain maps to 133–374 (LTPKHYAYLK…MQVQQRISAA (242 aa)). The 67-residue stretch at 377 to 443 (QQKVGKTLAV…ADEYDLWGTC (67 aa)) folds into the TRAM domain.

It belongs to the methylthiotransferase family. RimO subfamily. It depends on [4Fe-4S] cluster as a cofactor.

Its subcellular location is the cytoplasm. The enzyme catalyses L-aspartate(89)-[ribosomal protein uS12]-hydrogen + (sulfur carrier)-SH + AH2 + 2 S-adenosyl-L-methionine = 3-methylsulfanyl-L-aspartate(89)-[ribosomal protein uS12]-hydrogen + (sulfur carrier)-H + 5'-deoxyadenosine + L-methionine + A + S-adenosyl-L-homocysteine + 2 H(+). Catalyzes the methylthiolation of an aspartic acid residue of ribosomal protein uS12. In Actinobacillus pleuropneumoniae serotype 5b (strain L20), this protein is Ribosomal protein uS12 methylthiotransferase RimO.